Consider the following 159-residue polypeptide: Cytochrome c-type biogenesis protein CcmE (159 aa).

Residues 1 to 8 are Cytoplasmic-facing; it reads MNPRRKTR. Residues 9–29 form a helical; Signal-anchor for type II membrane protein membrane-spanning segment; sequence LWVALTVLAGLGLTMALVLYA. Topologically, residues 30–159 are periplasmic; sequence LRANIDLFYT…PPQAYKDNRP (130 aa). Heme is bound by residues His-130 and Tyr-134. The disordered stretch occupies residues 130–159; the sequence is HDENYTPPEVKAAMDANHTRPPQAYKDNRP.

This sequence belongs to the CcmE/CycJ family.

It is found in the cell inner membrane. Its function is as follows. Heme chaperone required for the biogenesis of c-type cytochromes. Transiently binds heme delivered by CcmC and transfers the heme to apo-cytochromes in a process facilitated by CcmF and CcmH. This is Cytochrome c-type biogenesis protein CcmE from Cronobacter sakazakii (strain ATCC BAA-894) (Enterobacter sakazakii).